Reading from the N-terminus, the 279-residue chain is Pantothenate synthetase (279 aa).

Residue 31–38 participates in ATP binding; that stretch reads MGALHEGH. H38 (proton donor) is an active-site residue. Q62 is a binding site for (R)-pantoate. Residue Q62 coordinates beta-alanine. 148-151 is a binding site for ATP; sequence GEKD. Q154 is a binding site for (R)-pantoate. Residues V177 and 185–188 each bind ATP; that span reads LSSR.

Belongs to the pantothenate synthetase family. As to quaternary structure, homodimer.

The protein resides in the cytoplasm. The catalysed reaction is (R)-pantoate + beta-alanine + ATP = (R)-pantothenate + AMP + diphosphate + H(+). It functions in the pathway cofactor biosynthesis; (R)-pantothenate biosynthesis; (R)-pantothenate from (R)-pantoate and beta-alanine: step 1/1. In terms of biological role, catalyzes the condensation of pantoate with beta-alanine in an ATP-dependent reaction via a pantoyl-adenylate intermediate. The sequence is that of Pantothenate synthetase from Cereibacter sphaeroides (strain ATCC 17029 / ATH 2.4.9) (Rhodobacter sphaeroides).